Here is a 682-residue protein sequence, read N- to C-terminus: MIDQYKHQQLQIGLVSPQQIKAWANKNLPNGEVVGEVTRPSTFHYKTDKPEKDGLFCERIFGPIKSGICACGNSRPSGAENEDERFCQKCGVEFVDSRIRRYQMGYIKLACPVTHVWYLKGLPSYIANLLDKPLKKLEGLVYGDFSFARPSTKKPTFLRLRGLFEEEISSCNHSISPFFSTPGFATFRNREIATGAGAIREQLADLDLRIIIENSLVEWKELEDEGYSGDEWEDRKRRIRKVFLIRRMQLAKHFIQTNVEPEWMVLCLLPVLPPELRPIVYRSGDKVVTSDINELYKRVIRRNNNLAYLLKRSELAPADLVMCQEKLVQEAVDTLLDSGSRGQPIRDGHNKVYKSLSDVIEGKEGRFRETLLGKRVDYSGRSVIVVGPSLSLHQCGLPLEIAIKLFQLFVIRDLITKRATSNVRIAKRKIWEKEPIVWEILQEVMRGHPVLLNRAPTLHRLGIQAFQPTLVEGRTISLHPLVCKGFNADFDGDQMAVHLPLSLEAQAEARLLMFSHMNLLSPAIGDPICVPTQDMLIGLYVLTIGNHRGIYANRYNSCENYPNQKVNYNNNNSKYTKDKEPHFSSSYDAMGAYRQKLISLDSPLWLRWKLDQRVIGSREVPIEVQYESLGTYHEIYAHYLIVGNRKKEIRSIYIRTTLGHISFYREIEEAIQGFSQAYSYTI.

Zn(2+) is bound by residues Cys69, Cys71, Cys87, and Cys90. Asp489, Asp491, and Asp493 together coordinate Mg(2+).

The protein belongs to the RNA polymerase beta' chain family. RpoC1 subfamily. In terms of assembly, in plastids the minimal PEP RNA polymerase catalytic core is composed of four subunits: alpha, beta, beta', and beta''. When a (nuclear-encoded) sigma factor is associated with the core the holoenzyme is formed, which can initiate transcription. It depends on Mg(2+) as a cofactor. Zn(2+) is required as a cofactor.

Its subcellular location is the plastid. The protein localises to the chloroplast. The enzyme catalyses RNA(n) + a ribonucleoside 5'-triphosphate = RNA(n+1) + diphosphate. DNA-dependent RNA polymerase catalyzes the transcription of DNA into RNA using the four ribonucleoside triphosphates as substrates. This Agrostis stolonifera (Creeping bentgrass) protein is DNA-directed RNA polymerase subunit beta'.